Reading from the N-terminus, the 127-residue chain is Large ribosomal subunit protein eL8 (127 aa).

This sequence belongs to the eukaryotic ribosomal protein eL8 family. In terms of assembly, part of the 50S ribosomal subunit. Probably part of the RNase P complex.

It localises to the cytoplasm. Functionally, multifunctional RNA-binding protein that recognizes the K-turn motif in ribosomal RNA, the RNA component of RNase P, box H/ACA, box C/D and box C'/D' sRNAs. The sequence is that of Large ribosomal subunit protein eL8 from Picrophilus torridus (strain ATCC 700027 / DSM 9790 / JCM 10055 / NBRC 100828 / KAW 2/3).